The primary structure comprises 389 residues: Phosphoglycerate kinase (389 aa).

Residues 19–21 (DYN), Arg34, 57–60 (HLGR), Arg117, and Arg150 each bind substrate. ATP-binding positions include Lys200, Gly288, Glu319, and 347-350 (GGDS).

This sequence belongs to the phosphoglycerate kinase family. In terms of assembly, monomer.

It localises to the cytoplasm. It catalyses the reaction (2R)-3-phosphoglycerate + ATP = (2R)-3-phospho-glyceroyl phosphate + ADP. It participates in carbohydrate degradation; glycolysis; pyruvate from D-glyceraldehyde 3-phosphate: step 2/5. In Deinococcus geothermalis (strain DSM 11300 / CIP 105573 / AG-3a), this protein is Phosphoglycerate kinase.